Consider the following 542-residue polypeptide: 2,3-bisphosphoglycerate-independent phosphoglycerate mutase (542 aa).

D24 and S74 together coordinate Mn(2+). S74 acts as the Phosphoserine intermediate in catalysis. Residues H135, 165–166 (RD), R197, R203, 268–271 (RPDR), and K341 each bind substrate. Mn(2+) contacts are provided by D408, H412, D449, H450, and H467.

Belongs to the BPG-independent phosphoglycerate mutase family. As to quaternary structure, monomer. Mn(2+) serves as cofactor.

The catalysed reaction is (2R)-2-phosphoglycerate = (2R)-3-phosphoglycerate. Its pathway is carbohydrate degradation; glycolysis; pyruvate from D-glyceraldehyde 3-phosphate: step 3/5. Functionally, catalyzes the interconversion of 2-phosphoglycerate and 3-phosphoglycerate. The protein is 2,3-bisphosphoglycerate-independent phosphoglycerate mutase of Prochlorococcus marinus (strain NATL1A).